A 169-amino-acid polypeptide reads, in one-letter code: Disulfide bond formation protein B (169 aa).

The Cytoplasmic segment spans residues 1-13; that stretch reads MSQLQQFCHNRFS. Residues 14–30 traverse the membrane as a helical segment; that stretch reads WGLLLLSAIGLELAALF. Over 31–48 the chain is Periplasmic; that stretch reads FQYGMDLAPCVMCIYIRV. A disulfide bridge connects residues cysteine 40 and cysteine 43. Residues 49–64 traverse the membrane as a helical segment; sequence AVLGIILAALIGILQP. Residues 65–71 lie on the Cytoplasmic side of the membrane; that stretch reads KVWLLRL. Residues 72 to 89 traverse the membrane as a helical segment; sequence VGMAGWAVSAVWGFKLAY. At 90 to 144 the chain is on the periplasmic side; the sequence is ELNQMQVNPSPFATCSFYPEFPSFMPLDTWLPSVFSPTGMCSDSPWSWLSVSMAQ. An intrachain disulfide couples cysteine 104 to cysteine 130. The helical transmembrane segment at 145–163 threads the bilayer; that stretch reads WMMLGFAIYGVIWLLMLLP. Topologically, residues 164 to 169 are cytoplasmic; sequence ALKSAK.

The protein belongs to the DsbB family.

Its subcellular location is the cell inner membrane. Functionally, required for disulfide bond formation in some periplasmic proteins. Acts by oxidizing the DsbA protein. The chain is Disulfide bond formation protein B from Shewanella frigidimarina (strain NCIMB 400).